The primary structure comprises 164 residues: UPF0304 protein YfbU (164 aa).

It belongs to the UPF0304 family.

The protein is UPF0304 protein YfbU of Escherichia coli O139:H28 (strain E24377A / ETEC).